We begin with the raw amino-acid sequence, 103 residues long: Large ribosomal subunit protein uL24 (103 aa).

The protein belongs to the universal ribosomal protein uL24 family. As to quaternary structure, part of the 50S ribosomal subunit.

Functionally, one of two assembly initiator proteins, it binds directly to the 5'-end of the 23S rRNA, where it nucleates assembly of the 50S subunit. One of the proteins that surrounds the polypeptide exit tunnel on the outside of the subunit. The protein is Large ribosomal subunit protein uL24 of Actinobacillus pleuropneumoniae serotype 3 (strain JL03).